The chain runs to 364 residues: 4-hydroxy-3-methylbut-2-en-1-yl diphosphate synthase (flavodoxin) (364 aa).

Residues C268, C271, C303, and E310 each contribute to the [4Fe-4S] cluster site.

The protein belongs to the IspG family. [4Fe-4S] cluster serves as cofactor.

The catalysed reaction is (2E)-4-hydroxy-3-methylbut-2-enyl diphosphate + oxidized [flavodoxin] + H2O + 2 H(+) = 2-C-methyl-D-erythritol 2,4-cyclic diphosphate + reduced [flavodoxin]. It participates in isoprenoid biosynthesis; isopentenyl diphosphate biosynthesis via DXP pathway; isopentenyl diphosphate from 1-deoxy-D-xylulose 5-phosphate: step 5/6. In terms of biological role, converts 2C-methyl-D-erythritol 2,4-cyclodiphosphate (ME-2,4cPP) into 1-hydroxy-2-methyl-2-(E)-butenyl 4-diphosphate. The protein is 4-hydroxy-3-methylbut-2-en-1-yl diphosphate synthase (flavodoxin) of Desulfotalea psychrophila (strain LSv54 / DSM 12343).